The primary structure comprises 73 residues: Putative sulfur carrier protein AF_0556 (73 aa).

Catalysis depends on C11, which acts as the Cysteine persulfide intermediate.

It belongs to the sulfur carrier protein TusA family.

This is Putative sulfur carrier protein AF_0556 from Archaeoglobus fulgidus (strain ATCC 49558 / DSM 4304 / JCM 9628 / NBRC 100126 / VC-16).